Consider the following 340-residue polypeptide: Protein AC11 (340 aa).

Its function is as follows. Plays an essential role in nucleocapsid egress from the host nucleus to form the budded virion (BV). Does not participate in nucleocapsid formation. This is Protein AC11 from Autographa californica nuclear polyhedrosis virus (AcMNPV).